The primary structure comprises 1046 residues: Toluene efflux pump membrane transporter TtgE (1046 aa).

Transmembrane regions (helical) follow at residues Ile-10–Met-30, Ser-339–Leu-359, Leu-370–Ile-390, Val-392–Val-412, Gly-440–Gly-460, Phe-470–Pro-490, Leu-542–Phe-562, Ala-871–Glu-891, Val-895–Leu-915, Val-927–Ala-947, Ile-973–Ala-993, and Gly-1008–Val-1028.

It belongs to the resistance-nodulation-cell division (RND) (TC 2.A.6) family.

The protein resides in the cell inner membrane. In terms of biological role, the inner membrane transporter component of an inducible organic solvent efflux pump. Involved in export of toluene and styrene but not of m-xylene, propylbenzene or ethylbenzene. Is not involved in antibiotic or AMP efflux. In Pseudomonas putida (strain DOT-T1E), this protein is Toluene efflux pump membrane transporter TtgE (ttgE).